The sequence spans 229 residues: GTP:AMP phosphotransferase (229 aa).

10-15 (GVGKGT) contacts a ribonucleoside 5'-triphosphate. The segment at 30–59 (NVGNILRNEIKKESNIGKEVQNVVRSGNLV) is NMP. AMP contacts are provided by residues arginine 36, 57 to 59 (NLV), glycine 87, 87 to 90 (GFPR), and glutamine 94. The interval 123-170 (GRRICNICDKNFNVSNIQQDSFDMPPILPSKDCIQCNGHTNLIKRKDD) is LID. Residue arginine 178 coordinates AMP.

The protein belongs to the adenylate kinase family.

It is found in the mitochondrion. The catalysed reaction is a ribonucleoside 5'-triphosphate + AMP = a ribonucleoside 5'-diphosphate + ADP. The enzyme catalyses GTP + AMP = GDP + ADP. Its activity is regulated as follows. Inhibited by the dinucleoside pentaphosphate compound P1,P5-di(guanosine-5') pentaphosphate (GP5A). In terms of biological role, catalyzes the reversible transfer of the terminal phosphate group between GTP and AMP. Has very low activity with UTP, ITP, CTP and IMP and no activity with ATP, GMP, CMP and UMP in vitro. This is GTP:AMP phosphotransferase from Plasmodium falciparum (isolate 3D7).